The sequence spans 686 residues: XK-related protein 5 (686 aa).

A run of 5 helical transmembrane segments spans residues 33–53 (LLWG…QALS), 205–225 (HFWV…WLVA), 239–259 (LFNL…WDSP), 265–285 (VTFY…ATDF), and 297–317 (IAGV…YYSL). 3 disordered regions span residues 340 to 362 (DKTE…ESSG), 444 to 470 (LQRK…NSSA), and 490 to 589 (FASD…VGLA). 2 stretches are compositionally biased toward polar residues: residues 455–470 (LPSS…NSSA) and 490–509 (FASD…TQGE). The segment covering 523–536 (QGKGTGGQQRGGEG) has biased composition (gly residues). Residues 550–567 (VATSSQQEGSPATLQTAH) are compositionally biased toward polar residues.

Belongs to the XK family.

The protein localises to the cell membrane. In Pan troglodytes (Chimpanzee), this protein is XK-related protein 5.